Reading from the N-terminus, the 65-residue chain is uncharacterized protein (65 aa).

This is an uncharacterized protein from Homo sapiens (Human).